The primary structure comprises 188 residues: GTPase KRas (188 aa).

Residues 10–18, 29–35, 59–60, and 116–119 each bind GTP; these read GAGGVGKSA, VDEYDPT, AG, and NKCD. The short motif at 32–40 is the Effector region element; sequence YDPTIEDSY. Residues 167-188 form a disordered region; it reads KEKMSKEGKKKKKKSKTKCILM. A Cysteine methyl ester modification is found at cysteine 185. Cysteine 185 is lipidated: S-farnesyl cysteine. Residues 186–188 constitute a propeptide, removed in mature form; sequence ILM.

This sequence belongs to the small GTPase superfamily. Ras family.

Its subcellular location is the cell membrane. The protein localises to the cytoplasm. The enzyme catalyses GTP + H2O = GDP + phosphate + H(+). Its activity is regulated as follows. Alternates between an inactive form bound to GDP and an active form bound to GTP. Activated by a guanine nucleotide-exchange factor (GEF) and inactivated by a GTPase-activating protein (GAP). Functionally, ras proteins bind GDP/GTP and possess intrinsic GTPase activity. Plays an important role in the regulation of cell proliferation. The sequence is that of GTPase KRas (kras1) from Oryzias latipes (Japanese rice fish).